A 192-amino-acid chain; its full sequence is UPF0312 protein plu2095 (192 aa).

A signal peptide spans 1–23 (MLKKTLLGLTAGALLLNASSALA).

The protein belongs to the UPF0312 family. Type 1 subfamily.

It is found in the periplasm. The polypeptide is UPF0312 protein plu2095 (Photorhabdus laumondii subsp. laumondii (strain DSM 15139 / CIP 105565 / TT01) (Photorhabdus luminescens subsp. laumondii)).